A 107-amino-acid polypeptide reads, in one-letter code: Probable monothiol glutaredoxin 2 (107 aa).

The Glutaredoxin domain maps to 7-107; it reads FKFIENEIKN…LEKMLKAYTR (101 aa). Lysine 24 lines the glutathione pocket. Cysteine 32 serves as a coordination point for [2Fe-2S] cluster. Residues arginine 61, phenylalanine 73, and 86-87 each bind glutathione; that span reads CD.

The protein belongs to the glutaredoxin family. Monothiol subfamily.

The sequence is that of Probable monothiol glutaredoxin 2 (grxC2) from Rickettsia conorii (strain ATCC VR-613 / Malish 7).